The chain runs to 347 residues: S-adenosylmethionine:tRNA ribosyltransferase-isomerase (347 aa).

This sequence belongs to the QueA family. As to quaternary structure, monomer.

The protein resides in the cytoplasm. It carries out the reaction 7-aminomethyl-7-carbaguanosine(34) in tRNA + S-adenosyl-L-methionine = epoxyqueuosine(34) in tRNA + adenine + L-methionine + 2 H(+). It participates in tRNA modification; tRNA-queuosine biosynthesis. Its function is as follows. Transfers and isomerizes the ribose moiety from AdoMet to the 7-aminomethyl group of 7-deazaguanine (preQ1-tRNA) to give epoxyqueuosine (oQ-tRNA). In Streptococcus thermophilus (strain ATCC BAA-491 / LMD-9), this protein is S-adenosylmethionine:tRNA ribosyltransferase-isomerase.